Consider the following 204-residue polypeptide: MTDNLQLTQLVETCRWIGAKGWAPATGGNMSVRQDDAFCWLSESGKDKGNLTTDDFLQVEIATSHAPSGRKPSAETGLHTLIYHLFPQANAVLHVHTANATVLSRIVKTPELYISGFEMQKSLSGQTTHLDTVCVPVFDNDQDIDALASRIAHYAQERSLNYGFLLRGHGLTCWGRSVEEARRHLEGLEFLFECEMRLRQLERL.

Residues His94 and His96 each contribute to the Zn(2+) site.

The protein belongs to the aldolase class II family. MtnB subfamily. Zn(2+) is required as a cofactor.

The catalysed reaction is 5-(methylsulfanyl)-D-ribulose 1-phosphate = 5-methylsulfanyl-2,3-dioxopentyl phosphate + H2O. Its pathway is amino-acid biosynthesis; L-methionine biosynthesis via salvage pathway; L-methionine from S-methyl-5-thio-alpha-D-ribose 1-phosphate: step 2/6. In terms of biological role, catalyzes the dehydration of methylthioribulose-1-phosphate (MTRu-1-P) into 2,3-diketo-5-methylthiopentyl-1-phosphate (DK-MTP-1-P). This is Methylthioribulose-1-phosphate dehydratase from Citrobacter koseri (strain ATCC BAA-895 / CDC 4225-83 / SGSC4696).